A 482-amino-acid chain; its full sequence is Glutamate--tRNA ligase (482 aa).

The 'HIGH' region motif lies at 10-20 (PSPTGFLHIGN). Positions 253–257 (KLSKR) match the 'KMSKS' region motif. Residue K256 participates in ATP binding.

Belongs to the class-I aminoacyl-tRNA synthetase family. Glutamate--tRNA ligase type 1 subfamily. Monomer.

The protein localises to the cytoplasm. The enzyme catalyses tRNA(Glu) + L-glutamate + ATP = L-glutamyl-tRNA(Glu) + AMP + diphosphate. Functionally, catalyzes the attachment of glutamate to tRNA(Glu) in a two-step reaction: glutamate is first activated by ATP to form Glu-AMP and then transferred to the acceptor end of tRNA(Glu). The chain is Glutamate--tRNA ligase from Mesoplasma florum (strain ATCC 33453 / NBRC 100688 / NCTC 11704 / L1) (Acholeplasma florum).